The sequence spans 519 residues: UPF0053 protein bbp_300 (519 aa).

7 helical membrane-spanning segments follow: residues 13–35 (LLTL…AILS), 48–70 (LIGL…WMVT), 80–102 (YFSF…FKAT), 123–145 (AGFW…DAII), 150–172 (TINN…LIAS), 185–207 (VVVL…ALGF), and 212–231 (GYLY…NQIA). 2 consecutive CBS domains span residues 311–373 (MTPR…IIDF) and 374–434 (SSTT…DADE).

This sequence belongs to the UPF0053 family.

The protein resides in the cell membrane. In Buchnera aphidicola subsp. Baizongia pistaciae (strain Bp), this protein is UPF0053 protein bbp_300.